A 680-amino-acid chain; its full sequence is 1-deoxy-D-xylulose-5-phosphate synthase (680 aa).

Residues 1-17 (MQQSPHSPQSQSLSASA) show a composition bias toward low complexity. Residues 1 to 20 (MQQSPHSPQSQSLSASAVDS) are disordered. Thiamine diphosphate-binding positions include His113 and 154–156 (GHS). Asp185 lines the Mg(2+) pocket. Residues 186–187 (GA), Asn214, Phe323, and Glu408 each bind thiamine diphosphate. Asn214 is a Mg(2+) binding site.

It belongs to the transketolase family. DXPS subfamily. In terms of assembly, homodimer. The cofactor is Mg(2+). Thiamine diphosphate is required as a cofactor.

It catalyses the reaction D-glyceraldehyde 3-phosphate + pyruvate + H(+) = 1-deoxy-D-xylulose 5-phosphate + CO2. The protein operates within metabolic intermediate biosynthesis; 1-deoxy-D-xylulose 5-phosphate biosynthesis; 1-deoxy-D-xylulose 5-phosphate from D-glyceraldehyde 3-phosphate and pyruvate: step 1/1. Functionally, catalyzes the acyloin condensation reaction between C atoms 2 and 3 of pyruvate and glyceraldehyde 3-phosphate to yield 1-deoxy-D-xylulose-5-phosphate (DXP). This Psychrobacter cryohalolentis (strain ATCC BAA-1226 / DSM 17306 / VKM B-2378 / K5) protein is 1-deoxy-D-xylulose-5-phosphate synthase.